The sequence spans 179 residues: MSRIGKRPIPIPNKVTIDIQGQHVAVKGPKGSLERTLPDKVNVVQENDTLLVQREDDSRTARERHGLTRTLVANMVEGVSKGFEKRLSIQGVGYRAQVQGTKLTLNVGYSKPVEMTMPAGIQVAVENNTLVIVSGIDKEIVGNVSAEIRAVRPPEVYKGKGIRYSDEFVRRKAGKTGKK.

Belongs to the universal ribosomal protein uL6 family. As to quaternary structure, part of the 50S ribosomal subunit.

Functionally, this protein binds to the 23S rRNA, and is important in its secondary structure. It is located near the subunit interface in the base of the L7/L12 stalk, and near the tRNA binding site of the peptidyltransferase center. The protein is Large ribosomal subunit protein uL6 of Rippkaea orientalis (strain PCC 8801 / RF-1) (Cyanothece sp. (strain PCC 8801)).